The chain runs to 189 residues: GTPase NRas (189 aa).

GTP-binding positions include 10–18 (GAGGVGKSA) and 29–30 (VD). The short motif at 32 to 40 (YDPTIEDSY) is the Effector region element. A glycan ((Microbial infection) O-linked (Glc) threonine; by P.sordellii toxin TcsL) is linked at threonine 35. 57 to 61 (DTAGQ) provides a ligand contact to GTP. Serine 89 is subject to Phosphoserine. 116 to 119 (NKCD) contacts GTP. Residues 166–185 (YRMKKLNSSDDGTQGCMGLP) are hypervariable region. Lysine 170 is covalently cross-linked (Glycyl lysine isopeptide (Lys-Gly) (interchain with G-Cter in ubiquitin)). A lipid anchor (S-palmitoyl cysteine) is attached at cysteine 181. Cysteine 186 is lipidated: S-farnesyl cysteine. The propeptide at 187–189 (VVM) is removed in mature form.

Belongs to the small GTPase superfamily. Ras family. As to quaternary structure, interacts (active GTP-bound form preferentially) with RGS14. Interacts (active GTP-bound form) with RASSF7. Interacts (active GTP-bound form) with both SHOC2 and PP1c (all isoforms) to form a tertiary complex; SHOC2 and PP1c preferably bind M-Ras/MRAS, but they also bind K-Ras/KRAS, N-Ras/NRAS and H-Ras/HRAS. Post-translationally, palmitoylated by the ZDHHC9-GOLGA7 complex. Depalmitoylated by ABHD17A, ABHD17B and ABHD17C. A continuous cycle of de- and re-palmitoylation regulates rapid exchange between plasma membrane and Golgi. Acetylation at Lys-104 prevents interaction with guanine nucleotide exchange factors (GEFs). In terms of processing, fatty-acylated at Lys-169 and/or Lys-170. Post-translationally, ubiquitinated by the BCR(LZTR1) E3 ubiquitin ligase complex at Lys-170 in a non-degradative manner, leading to inhibit Ras signaling by decreasing Ras association with membranes. Phosphorylation at Ser-89 enhances NRAS association with its downstream effectors. In terms of processing, (Microbial infection) Glucosylated at Thr-35 by P.sordellii toxin TcsL.

It is found in the cell membrane. It localises to the golgi apparatus membrane. The enzyme catalyses GTP + H2O = GDP + phosphate + H(+). Its activity is regulated as follows. Alternates between an inactive form bound to GDP and an active form bound to GTP. Activated by a guanine nucleotide-exchange factor (GEF) and inactivated by a GTPase-activating protein (GAP). In terms of biological role, ras proteins bind GDP/GTP and possess intrinsic GTPase activity. The chain is GTPase NRas (NRAS) from Homo sapiens (Human).